The following is a 132-amino-acid chain: Monothiol glutaredoxin-S9 (132 aa).

The disordered stretch occupies residues 16-38 (ASRPATAAAAPPPPPPRGEEEEV). The region spanning 35-131 (EEEVRRAVAE…PILKEAGALW (97 aa)) is the Glutaredoxin domain. Residue Cys-55 participates in [2Fe-2S] cluster binding. Residues 129-132 (ALWL) carry the Responsive for interaction with TGA factors motif.

This sequence belongs to the glutaredoxin family. CC-type subfamily.

The protein resides in the cytoplasm. It localises to the nucleus. Its function is as follows. May only reduce GSH-thiol disulfides, but not protein disulfides. The polypeptide is Monothiol glutaredoxin-S9 (GRXS9) (Oryza sativa subsp. japonica (Rice)).